Consider the following 395-residue polypeptide: 8-amino-3,8-dideoxy-alpha-D-manno-octulosonate transaminase (395 aa).

Lys-186 is subject to N6-(pyridoxal phosphate)lysine.

It belongs to the DegT/DnrJ/EryC1 family. It depends on pyridoxal 5'-phosphate as a cofactor.

It carries out the reaction 8-amino-3,8-dideoxy-alpha-D-manno-octulosonate + 2-oxoglutarate = 3,8-dideoxy-8-oxo-alpha-D-manno-octulosonate + L-glutamate. It participates in bacterial outer membrane biogenesis; lipopolysaccharide biosynthesis. Catalyzes the second (last) step of the biosynthesis of Kdo8N (8-amino-3,8-dideoxy-D-manno-octulosonate) from Kdo (3-deoxy-D-manno-octulosonate). In Shewanella oneidensis (strain ATCC 700550 / JCM 31522 / CIP 106686 / LMG 19005 / NCIMB 14063 / MR-1), this protein is 8-amino-3,8-dideoxy-alpha-D-manno-octulosonate transaminase.